Consider the following 87-residue polypeptide: U3-theraphotoxin-Hhn1o (87 aa).

The first 24 residues, 1 to 24 (MVNMKASMFLTFAGLVLLFVVCYA), serve as a signal peptide directing secretion. A propeptide spanning residues 25–52 (SESEEKEFPKEMLSSIFAVDNDFKQEER) is cleaved from the precursor. 2 cysteine pairs are disulfide-bonded: Cys54–Cys67 and Cys61–Cys72.

The protein belongs to the neurotoxin 10 (Hwtx-1) family. 51 (Hntx-8) subfamily. Hntx-8 sub-subfamily. As to expression, expressed by the venom gland.

It localises to the secreted. Its function is as follows. Ion channel inhibitor. In Cyriopagopus hainanus (Chinese bird spider), this protein is U3-theraphotoxin-Hhn1o.